The primary structure comprises 176 residues: dCTP deaminase (176 aa).

DCTP contacts are provided by residues 99-104 and Asp-115; that span reads RSTLAR. Residue Glu-125 is the Proton donor/acceptor of the active site. Residue Gln-163 coordinates dCTP.

It belongs to the dCTP deaminase family. In terms of assembly, homotrimer.

The catalysed reaction is dCTP + H2O + H(+) = dUTP + NH4(+). The protein operates within pyrimidine metabolism; dUMP biosynthesis; dUMP from dCTP (dUTP route): step 1/2. Functionally, catalyzes the deamination of dCTP to dUTP. This is dCTP deaminase from Pyrobaculum arsenaticum (strain DSM 13514 / JCM 11321 / PZ6).